A 200-amino-acid chain; its full sequence is Small ribosomal subunit protein uS4 (200 aa).

The disordered stretch occupies residues 22 to 43 (TGKELERRPYAPGQHGPTQRKK). Residues 92-170 (QRLDNIVYRL…VPEYVTFDAE (79 aa)) enclose the S4 RNA-binding domain.

This sequence belongs to the universal ribosomal protein uS4 family. As to quaternary structure, part of the 30S ribosomal subunit. Contacts protein S5. The interaction surface between S4 and S5 is involved in control of translational fidelity.

One of the primary rRNA binding proteins, it binds directly to 16S rRNA where it nucleates assembly of the body of the 30S subunit. Its function is as follows. With S5 and S12 plays an important role in translational accuracy. The polypeptide is Small ribosomal subunit protein uS4 (Listeria innocua serovar 6a (strain ATCC BAA-680 / CLIP 11262)).